A 253-amino-acid chain; its full sequence is Hydroxyacylglutathione hydrolase (253 aa).

Zn(2+)-binding residues include histidine 54, histidine 56, aspartate 58, histidine 59, histidine 112, aspartate 131, and histidine 169.

Belongs to the metallo-beta-lactamase superfamily. Glyoxalase II family. In terms of assembly, monomer. It depends on Zn(2+) as a cofactor.

It catalyses the reaction an S-(2-hydroxyacyl)glutathione + H2O = a 2-hydroxy carboxylate + glutathione + H(+). The protein operates within secondary metabolite metabolism; methylglyoxal degradation; (R)-lactate from methylglyoxal: step 2/2. Thiolesterase that catalyzes the hydrolysis of S-D-lactoyl-glutathione to form glutathione and D-lactic acid. This Bartonella henselae (strain ATCC 49882 / DSM 28221 / CCUG 30454 / Houston 1) (Rochalimaea henselae) protein is Hydroxyacylglutathione hydrolase.